Consider the following 248-residue polypeptide: Chromatin target of PRMT1 protein (248 aa).

Alanine 2 is subject to N-acetylalanine. Phosphoserine is present on residues serine 40, serine 49, and serine 64. Lysine 70 participates in a covalent cross-link: Glycyl lysine isopeptide (Lys-Gly) (interchain with G-Cter in SUMO2). The segment at 151–204 (LRRGGVRGRGGPGRGGLGRGAMGRGGIGGRGRGMIGRGRGGFGGRGRGRGRGRG) is disordered. The interval 153–206 (RGGVRGRGGPGRGGLGRGAMGRGGIGGRGRGMIGRGRGGFGGRGRGRGRGRGAL) is interaction with PRMT1. A compositionally biased stretch (gly residues) spans 157–195 (RGRGGPGRGGLGRGAMGRGGIGGRGRGMIGRGRGGFGGR). The short motif at 194 to 203 (GRGRGRGRGR) is the GAR motif; involved in 5hmC binding element. Phosphothreonine is present on threonine 242.

Interacts with PRMT1 and PRMT5. Interacts with the 5FMC complex; the interaction is methylation-dependent. Interacts with FYTTD1, SET and PRC1 complex members CBX4, RNF2 and PHC2; the interactions are methylation-independent. Interacts with ZNF148. Interacts with WDR77 and ER. Post-translationally, asymmetrically methylated by PRMT1. Symmetrically methylated by PRMT5.

The protein localises to the nucleus. The protein resides in the nucleolus. It localises to the nucleoplasm. Its subcellular location is the nucleus speckle. Plays an important role in the ligand-dependent activation of estrogen receptor target genes. May play a role in the silencing of fetal globin genes. Recruits the 5FMC complex to ZNF148, leading to desumoylation of ZNF148 and subsequent transactivation of ZNF148 target genes. Required for the tumorigenicity of glioblastoma cells. Binds to 5-hydroxymethylcytosine (5hmC) and associates with the methylosome complex containing PRMT1, PRMT5, MEP50 and ERH. The CHTOP-methylosome complex associated with 5hmC methylates H4R3 and transactivates genes involved in glioblastomagenesis. The protein is Chromatin target of PRMT1 protein (CHTOP) of Bos taurus (Bovine).